A 453-amino-acid polypeptide reads, in one-letter code: uncharacterized protein (453 aa).

Positions 74, 80, 83, and 162 each coordinate [4Fe-4S] cluster. S-adenosyl-L-methionine-binding residues include Gln286, Tyr315, Glu336, and Asp384. The Nucleophile role is filled by Cys411.

It belongs to the class I-like SAM-binding methyltransferase superfamily. RNA M5U methyltransferase family.

This is an uncharacterized protein from Staphylococcus aureus (strain Mu50 / ATCC 700699).